We begin with the raw amino-acid sequence, 376 residues long: Glutamate 5-kinase (376 aa).

Lys15 contributes to the ATP binding site. Ser56, Asp143, and Asn155 together coordinate substrate. 175–176 (SD) is a binding site for ATP. In terms of domain architecture, PUA spans 281–358 (KGTLTIDAGA…PDVMMILGIT (78 aa)).

This sequence belongs to the glutamate 5-kinase family.

The protein resides in the cytoplasm. The enzyme catalyses L-glutamate + ATP = L-glutamyl 5-phosphate + ADP. Its pathway is amino-acid biosynthesis; L-proline biosynthesis; L-glutamate 5-semialdehyde from L-glutamate: step 1/2. Its function is as follows. Catalyzes the transfer of a phosphate group to glutamate to form L-glutamate 5-phosphate. The sequence is that of Glutamate 5-kinase from Rhodopseudomonas palustris (strain ATCC BAA-98 / CGA009).